We begin with the raw amino-acid sequence, 1186 residues long: Major DNA-binding protein (1186 aa).

A zinc finger spans residues 495-508 (CCLCSLDNRHSCAH). Residues 839 to 840 (FW) carry the Required for filament formation motif. The interval 1160 to 1186 (RRRPLACSDLFGDAPAEKRNDLTLDML) is required for nuclear localization.

This sequence belongs to the herpesviridae major DNA-binding protein family. As to quaternary structure, homooligomers. Forms double-helical filaments necessary for the formation of replication compartments within the host nucleus. Interacts with the origin-binding protein. Interacts with the helicase primase complex; this interaction stimulates primer synthesis activity of the helicase-primase complex. Interacts with the DNA polymerase. Interacts with the alkaline exonuclease; this interaction increases its nuclease processivity.

It localises to the host nucleus. Its function is as follows. Plays several crucial roles in viral infection. Participates in the opening of the viral DNA origin to initiate replication by interacting with the origin-binding protein. May disrupt loops, hairpins and other secondary structures present on ssDNA to reduce and eliminate pausing of viral DNA polymerase at specific sites during elongation. Promotes viral DNA recombination by performing strand-transfer, characterized by the ability to transfer a DNA strand from a linear duplex to a complementary single-stranded DNA circle. Can also catalyze the renaturation of complementary single strands. Additionally, reorganizes the host cell nucleus, leading to the formation of prereplicative sites and replication compartments. This process is driven by the protein which can form double-helical filaments in the absence of DNA. The chain is Major DNA-binding protein from Bovine herpesvirus 2 (strain BMV) (BoHV-2).